The primary structure comprises 303 residues: Probable 5-dehydro-4-deoxyglucarate dehydratase (303 aa).

It belongs to the DapA family.

The enzyme catalyses 5-dehydro-4-deoxy-D-glucarate + H(+) = 2,5-dioxopentanoate + CO2 + H2O. Its pathway is carbohydrate acid metabolism; D-glucarate degradation; 2,5-dioxopentanoate from D-glucarate: step 2/2. The sequence is that of Probable 5-dehydro-4-deoxyglucarate dehydratase from Pseudomonas syringae pv. tomato (strain ATCC BAA-871 / DC3000).